Reading from the N-terminus, the 188-residue chain is Sulfopyruvate decarboxylase subunit beta (188 aa).

Belongs to the TPP enzyme family. As to quaternary structure, heterododecamer composed of 6 subunits alpha and 6 subunits beta. Requires thiamine diphosphate as cofactor.

The catalysed reaction is 3-sulfopyruvate + H(+) = sulfoacetaldehyde + CO2. The protein operates within cofactor biosynthesis; coenzyme M biosynthesis; sulfoacetaldehyde from phosphoenolpyruvate and sulfite: step 4/4. With respect to regulation, inhibited by oxygen when heated in air at 80 degrees Celsius. The enzyme is reactivated by addition of dithionite. In terms of biological role, involved in the biosynthesis of the coenzyme M (2-mercaptoethanesulfonic acid). Catalyzes the decarboxylation of sulfopyruvate to sulfoacetaldehyde. This chain is Sulfopyruvate decarboxylase subunit beta, found in Methanocaldococcus jannaschii (strain ATCC 43067 / DSM 2661 / JAL-1 / JCM 10045 / NBRC 100440) (Methanococcus jannaschii).